We begin with the raw amino-acid sequence, 1159 residues long: DNA-directed RNA polymerase subunit beta (1159 aa).

The protein belongs to the RNA polymerase beta chain family. As to quaternary structure, the RNAP catalytic core consists of 2 alpha, 1 beta, 1 beta' and 1 omega subunit. When a sigma factor is associated with the core the holoenzyme is formed, which can initiate transcription.

It carries out the reaction RNA(n) + a ribonucleoside 5'-triphosphate = RNA(n+1) + diphosphate. DNA-dependent RNA polymerase catalyzes the transcription of DNA into RNA using the four ribonucleoside triphosphates as substrates. The polypeptide is DNA-directed RNA polymerase subunit beta (Deinococcus radiodurans (strain ATCC 13939 / DSM 20539 / JCM 16871 / CCUG 27074 / LMG 4051 / NBRC 15346 / NCIMB 9279 / VKM B-1422 / R1)).